The primary structure comprises 205 residues: MSAYRKGNIFIISAASGTGKTTLVSRLLANHNGLRVSVSHTTRPPREGEANGVHYHFVSKEEFESLIAQEAFLEYADVFGNYYGTGAEGVNALAAAGYDVILEIDVQGAAQVRDALPEAVGIFILPPSFDVLAARLNGRGTDSREVIQRRLSKARHEIEQSVLFDFVVVNDDLARAEEDLRHIVNACRLKRSRQLGFIADLLENS.

Residues 7–185 enclose the Guanylate kinase-like domain; it reads GNIFIISAAS…AEEDLRHIVN (179 aa). 14 to 21 serves as a coordination point for ATP; the sequence is AASGTGKT.

It belongs to the guanylate kinase family.

Its subcellular location is the cytoplasm. The enzyme catalyses GMP + ATP = GDP + ADP. Functionally, essential for recycling GMP and indirectly, cGMP. This is Guanylate kinase (gmk) from Neisseria meningitidis serogroup B (strain ATCC BAA-335 / MC58).